The following is a 330-amino-acid chain: Type II methyltransferase M.MthTI (330 aa).

The 326-residue stretch at 3–328 (MDIASFFSGA…KKIKKDLEGV (326 aa)) folds into the SAM-dependent MTase C5-type domain. Cys73 is an active-site residue.

Belongs to the class I-like SAM-binding methyltransferase superfamily. C5-methyltransferase family.

The catalysed reaction is a 2'-deoxycytidine in DNA + S-adenosyl-L-methionine = a 5-methyl-2'-deoxycytidine in DNA + S-adenosyl-L-homocysteine + H(+). In terms of biological role, a methylase that recognizes the double-stranded sequence 5'-GGCC-3', methylates C-3 on both strands, and protects the DNA from cleavage by the MthTI endonuclease. This chain is Type II methyltransferase M.MthTI (mthTIM), found in Methanothermobacter thermautotrophicus (Methanobacterium thermoformicicum).